A 68-amino-acid chain; its full sequence is Beta-defensin 1 (68 aa).

Residues 1–21 form the signal peptide; it reads MRTSYLLLFTLCLLLSEMASG. Positions 22-32 are excised as a propeptide; that stretch reads GNFLTGLGHRS. Cystine bridges form between cysteine 37–cysteine 66, cysteine 44–cysteine 59, and cysteine 49–cysteine 67.

This sequence belongs to the beta-defensin family. Monomer. Homodimer.

Its subcellular location is the secreted. It is found in the membrane. Functionally, has bactericidal activity. May act as a ligand for C-C chemokine receptor CCR6. Positively regulates the sperm motility and bactericidal activity in a CCR6-dependent manner. Binds to CCR6 and triggers Ca2+ mobilization in the sperm which is important for its motility. This is Beta-defensin 1 (DEFB1) from Pongo pygmaeus (Bornean orangutan).